We begin with the raw amino-acid sequence, 494 residues long: Cobyric acid synthase (494 aa).

The 198-residue stretch at 248-445 (ELEIAVLKLP…LHGIFDNGPW (198 aa)) folds into the GATase cobBQ-type domain. Cys-329 serves as the catalytic Nucleophile. The active site involves His-437.

It belongs to the CobB/CobQ family. CobQ subfamily.

Its pathway is cofactor biosynthesis; adenosylcobalamin biosynthesis. Its function is as follows. Catalyzes amidations at positions B, D, E, and G on adenosylcobyrinic A,C-diamide. NH(2) groups are provided by glutamine, and one molecule of ATP is hydrogenolyzed for each amidation. This is Cobyric acid synthase from Synechococcus sp. (strain WH7803).